An 838-amino-acid polypeptide reads, in one-letter code: Shutoff protein (838 aa).

Residues 1-102 (MEDQHSAASE…EQEEDSPDRY (102 aa)) form a disordered region. Residues 18–35 (TLPPPPPPPPPPTSPPPS) are compositionally biased toward pro residues. A compositionally biased stretch (low complexity) spans 52-65 (TCSSSSSSSASSEC). Positions 291-353 (LMQTLLVRRA…ACMVTVQLHC (63 aa)) are binding to host EIF4G. An RRM domain is found at 356–474 (TFLTSREMVR…SLWTGFDERT (119 aa)). Residues Tyr-373 and Tyr-690 each carry the phosphotyrosine; by host modification. A disordered region spans residues 693 to 838 (PHTGEELNTA…QELRRPQRGS (146 aa)). Low complexity predominate over residues 701 to 710 (TAAPSTAHHA). 2 stretches are compositionally biased toward basic and acidic residues: residues 737-746 (SYADRVRSEL) and 770-787 (HSRDAARRRGSQQRDQRQ). Residues 813–829 (QALLHQQQQQQEHQPAQ) show a composition bias toward low complexity.

Belongs to the adenoviridae shutoff protein family. Monomer. Interacts with hexon protein; this interaction allows chaperoning and trimerization of hexon proteins. Interacts (via N-terminus) with host initiation factor EIF4G (via C-terminus). Interacts (via RRM domain) with viral mRNAs that contain the tripartite leader; this interaction allows ribosome shunting and expression of viral late mRNAs. In terms of processing, might be cleaved by the viral protease. Post-translationally, phosphorylated. Tyrosine phosphorylation enhances preferential binding to tripartite leader mRNAs and allows ribosome shunting. Methylated. Asymmetric dimethylation by host PRMT1 of the Arg/Gly-rich region may regulate shutoff protein binding to hexon and promote the capsid assembly in the nucleus.

The protein localises to the host cytoplasm. Protein that inhibits host translation while promoting late viral translation by ribosome shunting. Blocks host cap-dependent translation by binding to eIF4G, displacing MKNK1 from cap initiation complexes and preventing EIF4E phosphorylation. Binds to the tripartite leader sequence of viral late mRNAs and recruits host eIF4G, PABPC1/poly-A binding protein and 40S ribosomes subunits on viral mRNAs, allowing ribosome shunting and efficient translation of late viral mRNAs even though conventional translation via ribosome scanning from the cap has been shut off in the host cell. During assembly, acts as a chaperone protein that helps hexon proteins assembly into trimers. The chain is Shutoff protein from Porcine adenovirus A serotype 3 (PAdV-3).